The primary structure comprises 1039 residues: uncharacterized protein (1039 aa).

This is an uncharacterized protein from Treponema pallidum (strain Nichols).